We begin with the raw amino-acid sequence, 277 residues long: Undecaprenyl-diphosphatase (277 aa).

7 consecutive transmembrane segments (helical) span residues 1-21 (MTWI…FLPI), 41-61 (GAAF…IYFW), 90-110 (WLII…EDWI), 114-134 (FRSL…LALA), 191-211 (AFLL…YTSL), 224-244 (ETLV…AWLM), and 255-275 (FVWY…AGVI).

The protein belongs to the UppP family.

It is found in the cell membrane. It catalyses the reaction di-trans,octa-cis-undecaprenyl diphosphate + H2O = di-trans,octa-cis-undecaprenyl phosphate + phosphate + H(+). Catalyzes the dephosphorylation of undecaprenyl diphosphate (UPP). Confers resistance to bacitracin. The polypeptide is Undecaprenyl-diphosphatase (Micrococcus luteus (strain ATCC 4698 / DSM 20030 / JCM 1464 / CCM 169 / CCUG 5858 / IAM 1056 / NBRC 3333 / NCIMB 9278 / NCTC 2665 / VKM Ac-2230) (Micrococcus lysodeikticus)).